The primary structure comprises 132 residues: MDRQMLIKEAIQAREGAYVPYSRFQVGAALLMKDGSVIRGANIENASYGLTNCAERTALFKAYSEGRRDVVAIAVVADTKRPVPPCGACRQVMAELCPADTKVYLGNLQGDIQEITVSELLPGAFTAEDMND.

One can recognise a CMP/dCMP-type deaminase domain in the interval 1–128 (MDRQMLIKEA…ELLPGAFTAE (128 aa)). Substrate is bound at residue 42-44 (NIE). Residue Cys53 participates in Zn(2+) binding. Residue Glu55 is the Proton donor of the active site. Positions 86 and 89 each coordinate Zn(2+).

Belongs to the cytidine and deoxycytidylate deaminase family. Requires Zn(2+) as cofactor.

It catalyses the reaction cytidine + H2O + H(+) = uridine + NH4(+). The enzyme catalyses 2'-deoxycytidine + H2O + H(+) = 2'-deoxyuridine + NH4(+). Functionally, this enzyme scavenges exogenous and endogenous cytidine and 2'-deoxycytidine for UMP synthesis. The polypeptide is Cytidine deaminase (cdd) (Halalkalibacterium halodurans (strain ATCC BAA-125 / DSM 18197 / FERM 7344 / JCM 9153 / C-125) (Bacillus halodurans)).